The primary structure comprises 66 residues: Beta-toxin Chui3 (66 aa).

The region spanning 1 to 66 (KEGYLVELGT…VWPLKNKTCR (66 aa)) is the LCN-type CS-alpha/beta domain. 4 disulfide bridges follow: C12/C65, C16/C41, C25/C46, and C29/C48.

This sequence belongs to the long (4 C-C) scorpion toxin superfamily. Sodium channel inhibitor family. Beta subfamily. Expressed by the venom gland.

The protein resides in the secreted. In terms of biological role, beta toxins bind voltage-independently at site-4 of sodium channels (Nav) and shift the voltage of activation toward more negative potentials thereby affecting sodium channel activation and promoting spontaneous and repetitive firing. Acts on human sodium channel Nav1.6/SCN8A. The chain is Beta-toxin Chui3 from Centruroides huichol (Scorpion).